The following is a 1499-amino-acid chain: Streptococcal surface protein B (1499 aa).

The signal sequence occupies residues 1–37; that stretch reads MQKREVFGFRKSKVAKTLCGAVLGAALIAIADQQVLA. The tract at residues 50–84 is disordered; sequence AVTTTGNPATNLPEAQGEATEAASQSQAQAGSKDG. 4 Ag I/II A repeats span residues 145 to 219, 220 to 301, 302 to 383, and 384 to 465; these read KKTT…QKAN, EDSQ…KKAK, EDND…KQAN, and ATNE…KKDF. Disordered stretches follow at residues 689 to 709, 763 to 907, and 1409 to 1472; these read YADSSNAEKSRGARWDTSEWD, TAPT…TPPV, and RTTT…TGTN. A compositionally biased stretch (basic and acidic residues) spans 694–705; the sequence is NAEKSRGARWDT. Residues 789-799 show a composition bias toward pro residues; it reads PTPPVKTPDQP. The segment covering 800 to 815 has biased composition (basic and acidic residues); it reads EPSKPEEPTYETEKPL. Positions 828–838 are enriched in pro residues; sequence PTPPVKIPDQP. Over residues 839-854 the composition is skewed to basic and acidic residues; it reads EPSKPEEPTYETEKPL. 2 stretches are compositionally biased toward pro residues: residues 867–877 and 888–907; these read PTPPVKTPDQP and DPLPTPPLAPTPKQLPTPPV. Residues 1428 to 1450 are compositionally biased toward basic and acidic residues; the sequence is KPKDPDKPETPKEPKVPSPKVED. The LPXTG sorting signal motif lies at 1466–1470; the sequence is LPKTG. Thr-1469 is subject to Pentaglycyl murein peptidoglycan amidated threonine. The propeptide at 1470 to 1499 is removed by sortase; that stretch reads GTNDATYMPYLGLAALVGFLGLGLAKRKED.

This sequence belongs to the antigen I/II family.

It localises to the secreted. Its subcellular location is the cell wall. The protein localises to the cell surface. Adhesin that mediates binding of bacteria to a variety of host cells. Plays a role in the bacterial invasion of dentinal tubules. A host immunostimulatory component, it modulates the innate immunity response. Plays a protective role against some antibiotics and cationic antimicrobial peptides (histatin-5, HTN3, but not beta-defensin 4A, DEFB4A). This chain is Streptococcal surface protein B, found in Streptococcus gordonii (strain Challis / ATCC 35105 / BCRC 15272 / CH1 / DL1 / V288).